We begin with the raw amino-acid sequence, 32 residues long: Fibrinolytic enzyme (32 aa).

In terms of processing, the N-terminus is blocked.

With respect to regulation, inhibited by phenylmethanesulfonyl fluoride (PMSF). Not inhibited by EDTA, EGTA, beta-mercaptoethanol, indoacetamide, benzamidine, aprotinin, pepstatin A and trypsin inhibitor. Its function is as follows. Plasmin-like serine protease. Has fibrinolytic and fibrinogenolytic but not plasminogenolytic activity. Cleaves after Arg and Lys residues. The protein is Fibrinolytic enzyme of Hediste japonica (Polychaete worm).